The primary structure comprises 511 residues: 2,3-bisphosphoglycerate-independent phosphoglycerate mutase (511 aa).

Residues Asp12 and Ser62 each contribute to the Mn(2+) site. Ser62 (phosphoserine intermediate) is an active-site residue. Residues His123, 153–154 (RD), Arg185, Arg191, 260–263 (RPDR), and Lys333 contribute to the substrate site. Mn(2+) is bound by residues Asp400, His404, Asp441, His442, and His460.

Belongs to the BPG-independent phosphoglycerate mutase family. Monomer. It depends on Mn(2+) as a cofactor.

The enzyme catalyses (2R)-2-phosphoglycerate = (2R)-3-phosphoglycerate. Its pathway is carbohydrate degradation; glycolysis; pyruvate from D-glyceraldehyde 3-phosphate: step 3/5. Functionally, catalyzes the interconversion of 2-phosphoglycerate and 3-phosphoglycerate. In Clostridium novyi (strain NT), this protein is 2,3-bisphosphoglycerate-independent phosphoglycerate mutase.